Reading from the N-terminus, the 190-residue chain is Movement protein TGB3 (190 aa).

Topologically, residues 1–52 (MDPPVILHSPNCSCQFCSSELPSTHTCGSQDRTVPLHVEATAAGHMEAKNFS) are cytoplasmic. A helical transmembrane segment spans residues 53–73 (LQYVLLVAFVSVLLGFSFCVY). Over 74–166 (LKSMSNDEAS…TPCENNVLLK (93 aa)) the chain is Lumenal. 2 positions are modified to phosphotyrosine: Tyr-89 and Tyr-120. The Involved in plasmodesmata targeting and virus cell-to-cell movement signature appears at 89 to 93 (YQDLN). The helical transmembrane segment at 167 to 187 (LWKDDLSFTIIAVTVLVGAML) threads the bilayer. Over 188–190 (ARC) the chain is Cytoplasmic.

Belongs to the virgaviridae TGB3 movement protein family. Interacts with movement protein TGB2. TGB1-TGB3-TGB2 complex formation is enhanced by ATP hydrolysis.

The protein localises to the host cell junction. The protein resides in the host plasmodesma. Its subcellular location is the host endoplasmic reticulum membrane. It localises to the host cytoplasm. It is found in the host cytoskeleton. Participates in the transport of viral genome to neighboring plant cells directly through plasmodesmata, without any budding. TGBp2 and TGBp3 are necessary for intracellular delivery of TGBp1-containing vRNPs to plasmodesmata. Can gate plasmodesmata and increase their size exclusion limit. Induces host actin cytoskeleton network thickening, which probably plays a major role in virus cell-to-cell movement. This Solanum nigrum (Black nightshade) protein is Movement protein TGB3.